The primary structure comprises 88 residues: UPF0297 protein SSA_2241 (88 aa).

It belongs to the UPF0297 family.

The polypeptide is UPF0297 protein SSA_2241 (Streptococcus sanguinis (strain SK36)).